The chain runs to 283 residues: DNA repair protein RecO (283 aa).

This sequence belongs to the RecO family.

Its function is as follows. Involved in DNA repair and RecF pathway recombination. This is DNA repair protein RecO from Gloeothece citriformis (strain PCC 7424) (Cyanothece sp. (strain PCC 7424)).